The sequence spans 253 residues: Chitooligosaccharide deacetylase (253 aa).

The Mg(2+) site is built by His-61 and His-126.

This sequence belongs to the YdjC deacetylase family. ChbG subfamily. Homodimer. Requires Mg(2+) as cofactor.

It is found in the cytoplasm. It carries out the reaction N,N'-diacetylchitobiose + H2O = N-acetyl-beta-D-glucosaminyl-(1-&gt;4)-D-glucosamine + acetate. The enzyme catalyses diacetylchitobiose-6'-phosphate + H2O = N'-monoacetylchitobiose-6'-phosphate + acetate. Its pathway is glycan degradation; chitin degradation. Involved in the degradation of chitin. ChbG is essential for growth on the acetylated chitooligosaccharides chitobiose and chitotriose but is dispensable for growth on cellobiose and chitosan dimer, the deacetylated form of chitobiose. Deacetylation of chitobiose-6-P and chitotriose-6-P is necessary for both the activation of the chb promoter by the regulatory protein ChbR and the hydrolysis of phosphorylated beta-glucosides by the phospho-beta-glucosidase ChbF. Catalyzes the removal of only one acetyl group from chitobiose-6-P to yield monoacetylchitobiose-6-P, the inducer of ChbR and the substrate of ChbF. This chain is Chitooligosaccharide deacetylase, found in Yersinia enterocolitica serotype O:8 / biotype 1B (strain NCTC 13174 / 8081).